We begin with the raw amino-acid sequence, 452 residues long: Pup--protein ligase (452 aa).

E9 provides a ligand contact to Mg(2+). An ATP-binding site is contributed by R53. Y55 is a Mg(2+) binding site. D57 (proton acceptor) is an active-site residue. E63 contacts Mg(2+). 2 residues coordinate ATP: T66 and W419.

The protein belongs to the Pup ligase/Pup deamidase family. Pup-conjugating enzyme subfamily.

The enzyme catalyses ATP + [prokaryotic ubiquitin-like protein]-L-glutamate + [protein]-L-lysine = ADP + phosphate + N(6)-([prokaryotic ubiquitin-like protein]-gamma-L-glutamyl)-[protein]-L-lysine.. It participates in protein degradation; proteasomal Pup-dependent pathway. It functions in the pathway protein modification; protein pupylation. Functionally, catalyzes the covalent attachment of the prokaryotic ubiquitin-like protein modifier Pup to the proteasomal substrate proteins, thereby targeting them for proteasomal degradation. This tagging system is termed pupylation. The ligation reaction involves the side-chain carboxylate of the C-terminal glutamate of Pup and the side-chain amino group of a substrate lysine. This chain is Pup--protein ligase, found in Geodermatophilus obscurus (strain ATCC 25078 / DSM 43160 / JCM 3152 / CCUG 61914 / KCC A-0152 / KCTC 9177 / NBRC 13315 / NRRL B-3577 / G-20).